A 149-amino-acid chain; its full sequence is MADQLTEEQIAEFKEAGSLFDKDGDGTITTKELGTVMRSVGQNPTEAELQDMINEVDADGNGTIDFPEFLTMMARKMKDTDSEEEILEAFQGFDKDGNGFISAAELRHMMTNLGEKLTDEEVDEMIREADIDGDGQINYEEFVKMMMSK.

An N-acetylalanine modification is found at alanine 2. 4 consecutive EF-hand domains span residues 8–43 (EQIA…VGQN), 44–79 (PTEA…KMKD), 81–116 (DSEE…LGEK), and 117–149 (LTDE…MMSK). Positions 21, 23, 25, 27, 32, 57, 59, 61, 63, 68, 94, 96, 98, 105, 130, 132, 134, 136, and 141 each coordinate Ca(2+).

The protein belongs to the calmodulin family.

Functionally, calmodulin mediates the control of a large number of enzymes, ion channels and other proteins by Ca(2+). Among the enzymes to be stimulated by the calmodulin-Ca(2+) complex are a number of protein kinases and phosphatases. The polypeptide is Calmodulin (CMD1) (Achlya klebsiana).